Consider the following 162-residue polypeptide: Photosystem II extrinsic protein V (162 aa).

Positions 1-25 (MFKKFSALFTLLFTLCLVNPMLVYS) are cleaved as a signal peptide. Heme c contacts are provided by Cys-62, Cys-65, His-66, and His-117.

The protein belongs to the cytochrome c family. PsbV subfamily. PSII is composed of 1 copy each of membrane proteins PsbA, PsbB, PsbC, PsbD, PsbE, PsbF, PsbH, PsbI, PsbJ, PsbK, PsbL, PsbM, PsbT, PsbX, PsbY, PsbZ, Psb30/Ycf12, at least 3 peripheral proteins of the oxygen-evolving complex and a large number of cofactors. It forms dimeric complexes. The cofactor is heme c.

It is found in the plastid. The protein localises to the chloroplast thylakoid membrane. Functionally, one of the extrinsic, lumenal subunits of photosystem II (PSII). PSII is a light-driven water plastoquinone oxidoreductase, using light energy to abstract electrons from H(2)O, generating a proton gradient subsequently used for ATP formation. The extrinsic proteins stabilize the structure of photosystem II oxygen-evolving complex (OEC), the ion environment of oxygen evolution and protect the OEC against heat-induced inactivation. The polypeptide is Photosystem II extrinsic protein V (Guillardia theta (Cryptophyte)).